A 61-amino-acid polypeptide reads, in one-letter code: Large ribosomal subunit protein uL29 (61 aa).

The protein belongs to the universal ribosomal protein uL29 family.

The polypeptide is Large ribosomal subunit protein uL29 (Stenotrophomonas maltophilia (strain R551-3)).